Reading from the N-terminus, the 328-residue chain is Malate dehydrogenase (328 aa).

An NAD(+)-binding site is contributed by 12 to 18 (GAAGQIG). 2 residues coordinate substrate: Arg-95 and Arg-101. NAD(+) contacts are provided by residues Asn-108, Gln-115, and 132 to 134 (VGN). The substrate site is built by Asn-134 and Arg-165. The active-site Proton acceptor is His-190.

This sequence belongs to the LDH/MDH superfamily. MDH type 2 family.

The catalysed reaction is (S)-malate + NAD(+) = oxaloacetate + NADH + H(+). Functionally, catalyzes the reversible oxidation of malate to oxaloacetate. This Polaromonas sp. (strain JS666 / ATCC BAA-500) protein is Malate dehydrogenase.